The sequence spans 497 residues: Probable polyamine oxidase 4 (497 aa).

The FAD site is built by glutamate 58, arginine 66, valine 247, and glutamate 435. The short motif at 495 to 497 (SRM) is the Microbody targeting signal element.

It belongs to the flavin monoamine oxidase family. Requires FAD as cofactor. In terms of tissue distribution, highly expressed in roots, flowers and greening cotelydons. Lower expression in other tissues.

It localises to the peroxisome. It carries out the reaction spermine + O2 + H2O = 3-aminopropanal + spermidine + H2O2. It catalyses the reaction spermidine + O2 + H2O = 3-aminopropanal + putrescine + H2O2. Its pathway is amine and polyamine degradation; spermine degradation. It participates in amine and polyamine degradation; spermidine degradation. Flavoenzyme involved in polyamine back-conversion. Catalyzes the oxidation of the secondary amino group of polyamines, such as spermine and spermidine. Substrate preference is spermine &gt; spermidine. No activity detected when putrescine or N(1)-acetylspermine are used as substrates. Plays an important role in the regulation of polyamine intracellular concentration. The chain is Probable polyamine oxidase 4 (PAO4) from Arabidopsis thaliana (Mouse-ear cress).